We begin with the raw amino-acid sequence, 529 residues long: Phosphoenolpyruvate carboxykinase (ATP) (529 aa).

Substrate contacts are provided by Arg-60, Tyr-195, and Lys-201. Residues Lys-201, His-220, and 236–244 contribute to the ATP site; that span reads GLSGTGKTT. The Mn(2+) site is built by Lys-201 and His-220. Asp-257 lines the Mn(2+) pocket. Residues Glu-285, Arg-323, and Ser-448 each contribute to the ATP site. Arg-323 provides a ligand contact to substrate.

This sequence belongs to the phosphoenolpyruvate carboxykinase (ATP) family. The cofactor is Mn(2+).

The protein localises to the cytoplasm. It carries out the reaction oxaloacetate + ATP = phosphoenolpyruvate + ADP + CO2. Its pathway is carbohydrate biosynthesis; gluconeogenesis. Functionally, involved in the gluconeogenesis. Catalyzes the conversion of oxaloacetate (OAA) to phosphoenolpyruvate (PEP) through direct phosphoryl transfer between the nucleoside triphosphate and OAA. This Geobacter sp. (strain M21) protein is Phosphoenolpyruvate carboxykinase (ATP).